Here is a 113-residue protein sequence, read N- to C-terminus: MELPPQIQAQLMQLQQLQQQLQMILMQKQSVETELKECKKALEELEKSSSDEVYKLVGGLFVKRKKEDVKKELEEKVETLELRVKTLEKQEEKLQSRLKELQEKIQKMIPTAQ.

The protein belongs to the prefoldin subunit beta family. In terms of assembly, heterohexamer of two alpha and four beta subunits.

The protein resides in the cytoplasm. Molecular chaperone capable of stabilizing a range of proteins. Seems to fulfill an ATP-independent, HSP70-like function in archaeal de novo protein folding. In Methanocaldococcus jannaschii (strain ATCC 43067 / DSM 2661 / JAL-1 / JCM 10045 / NBRC 100440) (Methanococcus jannaschii), this protein is Prefoldin subunit beta (pfdB).